Here is a 118-residue protein sequence, read N- to C-terminus: Large ribosomal subunit protein uL23c (118 aa).

It belongs to the universal ribosomal protein uL23 family. Part of the 50S ribosomal subunit.

It localises to the plastid. It is found in the chloroplast. In terms of biological role, binds to 23S rRNA. This is Large ribosomal subunit protein uL23c (rpl23) from Stigeoclonium helveticum (Green alga).